A 403-amino-acid polypeptide reads, in one-letter code: Cysteine desulfurase IscS (403 aa).

Residues 73 to 74 (AT), Asn-153, Gln-181, and 201 to 203 (SAH) each bind pyridoxal 5'-phosphate. Lys-204 is subject to N6-(pyridoxal phosphate)lysine. Pyridoxal 5'-phosphate is bound at residue Thr-241. Cys-326 (cysteine persulfide intermediate) is an active-site residue. A [2Fe-2S] cluster-binding site is contributed by Cys-326.

This sequence belongs to the class-V pyridoxal-phosphate-dependent aminotransferase family. NifS/IscS subfamily. In terms of assembly, homodimer. Forms a heterotetramer with IscU, interacts with other sulfur acceptors. Pyridoxal 5'-phosphate is required as a cofactor.

The protein localises to the cytoplasm. It carries out the reaction (sulfur carrier)-H + L-cysteine = (sulfur carrier)-SH + L-alanine. The protein operates within cofactor biosynthesis; iron-sulfur cluster biosynthesis. In terms of biological role, master enzyme that delivers sulfur to a number of partners involved in Fe-S cluster assembly, tRNA modification or cofactor biosynthesis. Catalyzes the removal of elemental sulfur atoms from cysteine to produce alanine. Functions as a sulfur delivery protein for Fe-S cluster synthesis onto IscU, an Fe-S scaffold assembly protein, as well as other S acceptor proteins. The polypeptide is Cysteine desulfurase IscS (Methylococcus capsulatus (strain ATCC 33009 / NCIMB 11132 / Bath)).